The sequence spans 888 residues: ETO1-like protein 1 (888 aa).

The region spanning 180–280 is the BTB domain; it reads KNVVFKIGEE…ACDRELASLI (101 aa). TPR repeat units follow at residues 381–414, 441–477, 511–544, 637–670, and 711–744; these read VLGF…GHVY, SSVS…DPTL, LECL…CPDY, HERL…KRSF, and GQAL…RHTR. Residues 755 to 793 adopt a coiled-coil conformation; that stretch reads LRNDKAAAYEEMTRLIEKAQNNASAYEKRSEYCDRELAK. 2 TPR repeats span residues 807-840 and 842-873; these read VYPY…KADL and LLHL…DPNH.

The protein belongs to the ETO1 family. Interacts with the C-terminal domain of ACS4, ACS5 and ACS9. Predominantly expressed in flowers.

The protein operates within protein modification; protein ubiquitination. Its function is as follows. Possible regulator of the ethylene pathway, which acts by regulating the stability of 1-aminocyclopropane-1-carboxylate synthase (ACS) enzymes. May act as a substrate-specific adapter that connects ACS enzymes, such as ACS5, to ubiquitin ligase complexes, leading to proteasomal degradation of ACS enzymes. This chain is ETO1-like protein 1 (EOL1), found in Arabidopsis thaliana (Mouse-ear cress).